The chain runs to 187 residues: ATP synthase subunit b 2 (187 aa).

Polar residues predominate over residues 1–13; it reads MAESHATGTTTHT. The tract at residues 1 to 21 is disordered; it reads MAESHATGTTTHTEVPHGKPE. Residues 31–53 form a helical membrane-spanning segment; the sequence is ASQLVSFAIAFALLYVIVSRFAL.

Belongs to the ATPase B chain family. As to quaternary structure, F-type ATPases have 2 components, F(1) - the catalytic core - and F(0) - the membrane proton channel. F(1) has five subunits: alpha(3), beta(3), gamma(1), delta(1), epsilon(1). F(0) has three main subunits: a(1), b(2) and c(10-14). The alpha and beta chains form an alternating ring which encloses part of the gamma chain. F(1) is attached to F(0) by a central stalk formed by the gamma and epsilon chains, while a peripheral stalk is formed by the delta and b chains.

It localises to the cell inner membrane. F(1)F(0) ATP synthase produces ATP from ADP in the presence of a proton or sodium gradient. F-type ATPases consist of two structural domains, F(1) containing the extramembraneous catalytic core and F(0) containing the membrane proton channel, linked together by a central stalk and a peripheral stalk. During catalysis, ATP synthesis in the catalytic domain of F(1) is coupled via a rotary mechanism of the central stalk subunits to proton translocation. Functionally, component of the F(0) channel, it forms part of the peripheral stalk, linking F(1) to F(0). The b'-subunit is a diverged and duplicated form of b found in plants and photosynthetic bacteria. This is ATP synthase subunit b 2 (atpF2) from Afipia carboxidovorans (strain ATCC 49405 / DSM 1227 / KCTC 32145 / OM5) (Oligotropha carboxidovorans).